Consider the following 119-residue polypeptide: Class I hydrophobin 2 (119 aa).

Positions 1–22 are cleaved as a signal peptide; the sequence is MFARISTIITTLFFAMLAAATA. 4 cysteine pairs are disulfide-bonded: C36–C97, C45–C91, C46–C79, and C98–C112.

It belongs to the fungal hydrophobin family. In terms of assembly, self-assembles to form functional amyloid fibrils called rodlets. Self-assembly into fibrillar rodlets occurs spontaneously at hydrophobic:hydrophilic interfaces and the rodlets further associate laterally to form amphipathic monolayers.

It is found in the secreted. The protein resides in the cell wall. In terms of biological role, aerial growth, conidiation, and dispersal of filamentous fungi in the environment rely upon a capability of their secreting small amphipathic proteins called hydrophobins (HPBs) with low sequence identity. Class I can self-assemble into an outermost layer of rodlet bundles on aerial cell surfaces, conferring cellular hydrophobicity that supports fungal growth, development and dispersal; whereas Class II form highly ordered films at water-air interfaces through intermolecular interactions but contribute nothing to the rodlet structure. Abh2 is a class I hydrophobin involved in the emergence of aerial hyphae and strands. The protein is Class I hydrophobin 2 of Agaricus bisporus (White button mushroom).